The chain runs to 128 residues: Large ribosomal subunit protein mL52 (128 aa).

A mitochondrion-targeting transit peptide spans 1–28 (MLQIAKLCLATSGRITAQRYVAVTTARA).

This sequence belongs to the mitochondrion-specific ribosomal protein mL52 family. As to quaternary structure, component of the mitochondrial ribosome large subunit (39S) which comprises a 16S rRNA and about 50 distinct proteins.

The protein resides in the mitochondrion. This chain is Large ribosomal subunit protein mL52 (mRpL52), found in Drosophila pseudoobscura pseudoobscura (Fruit fly).